A 146-amino-acid chain; its full sequence is Hemoglobin subunit beta (146 aa).

Valine 1 bears the N-acetylvaline mark. The Globin domain maps to 2–146 (HLTAEEKSAV…VANALAHKYH (145 aa)). Serine 44 carries the post-translational modification Phosphoserine. Residue lysine 59 is modified to N6-acetyllysine. Histidine 63 contacts heme b. Lysine 82 is subject to N6-acetyllysine. Histidine 92 serves as a coordination point for heme b. At cysteine 93 the chain carries S-nitrosocysteine. Residue lysine 144 is modified to N6-acetyllysine.

This sequence belongs to the globin family. In terms of assembly, heterotetramer of two alpha chains and two beta chains. Red blood cells.

Its function is as follows. Involved in oxygen transport from the lung to the various peripheral tissues. This Tamias merriami (Merriam's chipmunk) protein is Hemoglobin subunit beta.